Here is a 132-residue protein sequence, read N- to C-terminus: Antimicrobial protein Ace-AMP1 (132 aa).

The N-terminal stretch at 1-27 (MVRVVSLLAASTFILLIMIISSPYANS) is a signal peptide. Disulfide bonds link Cys-31-Cys-76, Cys-41-Cys-54, Cys-55-Cys-100, and Cys-74-Cys-116.

Belongs to the plant LTP family. Highly divergent. In terms of assembly, monomer.

In terms of biological role, antifungal and antibacterial activity against the Gram-positive bacteria B.megaterium and S.lutea. The polypeptide is Antimicrobial protein Ace-AMP1 (Allium cepa (Onion)).